We begin with the raw amino-acid sequence, 362 residues long: Chorismate synthase (362 aa).

Arg47 is an NADP(+) binding site. Residues 124 to 126 (RSS), Gly286, 301 to 305 (KPTAT), and Arg327 each bind FMN.

The protein belongs to the chorismate synthase family. Homotetramer. It depends on FMNH2 as a cofactor.

The catalysed reaction is 5-O-(1-carboxyvinyl)-3-phosphoshikimate = chorismate + phosphate. Its pathway is metabolic intermediate biosynthesis; chorismate biosynthesis; chorismate from D-erythrose 4-phosphate and phosphoenolpyruvate: step 7/7. In terms of biological role, catalyzes the anti-1,4-elimination of the C-3 phosphate and the C-6 proR hydrogen from 5-enolpyruvylshikimate-3-phosphate (EPSP) to yield chorismate, which is the branch point compound that serves as the starting substrate for the three terminal pathways of aromatic amino acid biosynthesis. This reaction introduces a second double bond into the aromatic ring system. The chain is Chorismate synthase from Gloeothece citriformis (strain PCC 7424) (Cyanothece sp. (strain PCC 7424)).